Consider the following 305-residue polypeptide: Deoxyhypusine hydroxylase (305 aa).

2 HEAT-like PBS-type repeats span residues 54–80 and 87–113; these read LKHELAYCLGQMQDESAIPTLEAVLKD and VRHEAGEALGAIGNPKVLELLKKYAED. Fe cation contacts are provided by H56, H89, and E90. The disordered stretch occupies residues 137–160; sequence EQTKDGTDENPYCSVDPAPPAQRK. HEAT-like PBS-type repeat units lie at residues 178-204, 209-235, and 242-268; these read DRYRAMFALRNLGTEEAVLALGDGLQC, FRHEIGYVLGQIQHEASIPQLQAALEK, and VRHECAEALGSIGKEPCVQILERYRKD. Residues H211, H244, and E245 each contribute to the Fe cation site.

This sequence belongs to the deoxyhypusine hydroxylase family. Fe(2+) serves as cofactor.

It carries out the reaction [eIF5A protein]-deoxyhypusine + AH2 + O2 = [eIF5A protein]-hypusine + A + H2O. The protein operates within protein modification; eIF5A hypusination. Functionally, catalyzes the hydroxylation of the N(6)-(4-aminobutyl)-L-lysine intermediate produced by deoxyhypusine synthase/DHPS on a critical lysine of the eukaryotic translation initiation factor 5A/eIF-5A. This is the second step of the post-translational modification of that lysine into an unusual amino acid residue named hypusine. Hypusination is unique to mature eIF-5A factor and is essential for its function. The chain is Deoxyhypusine hydroxylase (dohh) from Danio rerio (Zebrafish).